The following is a 661-amino-acid chain: Translation factor GUF1 homolog, mitochondrial (661 aa).

The tr-type G domain maps to 59–242; sequence ENIRNFCIVA…AIIDRIPSPK (184 aa). GTP contacts are provided by residues 68 to 75, 135 to 139, and 189 to 192; these read AHVDHGKS, DTPGH, and NKVD.

Belongs to the TRAFAC class translation factor GTPase superfamily. Classic translation factor GTPase family. LepA subfamily.

The protein resides in the mitochondrion inner membrane. The catalysed reaction is GTP + H2O = GDP + phosphate + H(+). In terms of biological role, promotes mitochondrial protein synthesis. May act as a fidelity factor of the translation reaction, by catalyzing a one-codon backward translocation of tRNAs on improperly translocated ribosomes. Binds to mitochondrial ribosomes in a GTP-dependent manner. In Ixodes scapularis (Black-legged tick), this protein is Translation factor GUF1 homolog, mitochondrial.